Consider the following 355-residue polypeptide: D-alanine--D-alanine ligase (355 aa).

One can recognise an ATP-grasp domain in the interval 143–350 (KIIFSNLKIP…IEQLVAKLVD (208 aa)). Residue 178–233 (LKKLNFPVFVKPSNSGSSLGISKVINKSEIIPALEKARGIDPSILIEEGLEVREIE) coordinates ATP. Mg(2+) contacts are provided by Asp303, Glu317, and Asn319.

This sequence belongs to the D-alanine--D-alanine ligase family. It depends on Mg(2+) as a cofactor. The cofactor is Mn(2+).

Its subcellular location is the cytoplasm. It carries out the reaction 2 D-alanine + ATP = D-alanyl-D-alanine + ADP + phosphate + H(+). Its pathway is cell wall biogenesis; peptidoglycan biosynthesis. In terms of biological role, cell wall formation. The sequence is that of D-alanine--D-alanine ligase from Prochlorococcus marinus (strain AS9601).